A 356-amino-acid polypeptide reads, in one-letter code: Protein RecA (356 aa).

Position 68–75 (68–75) interacts with ATP; the sequence is GQESSGKT.

The protein belongs to the RecA family.

It is found in the cytoplasm. Its function is as follows. Can catalyze the hydrolysis of ATP in the presence of single-stranded DNA, the ATP-dependent uptake of single-stranded DNA by duplex DNA, and the ATP-dependent hybridization of homologous single-stranded DNAs. It interacts with LexA causing its activation and leading to its autocatalytic cleavage. In Thermotoga sp. (strain RQ2), this protein is Protein RecA.